Consider the following 330-residue polypeptide: Ribosomal RNA small subunit methyltransferase C (330 aa).

It belongs to the methyltransferase superfamily. RsmC family. Monomer.

It is found in the cytoplasm. The enzyme catalyses guanosine(1207) in 16S rRNA + S-adenosyl-L-methionine = N(2)-methylguanosine(1207) in 16S rRNA + S-adenosyl-L-homocysteine + H(+). Specifically methylates the guanine in position 1207 of 16S rRNA in the 30S particle. This chain is Ribosomal RNA small subunit methyltransferase C, found in Haemophilus influenzae (strain 86-028NP).